Reading from the N-terminus, the 354-residue chain is Non-structural protein NS2 (354 aa).

2 disordered regions span residues 163-196 (NERE…DNEA) and 229-269 (DERD…THIT). Basic and acidic residues-rich tracts occupy residues 178-196 (SREE…DNEA) and 237-249 (DERG…KTLS). Over residues 250-260 (DDDDQGEDASD) the composition is skewed to acidic residues.

In terms of biological role, single-stranded RNA-binding protein. This Bluetongue virus 17 (isolate USA) (BTV 17) protein is Non-structural protein NS2 (Segment-8).